We begin with the raw amino-acid sequence, 194 residues long: Large ribosomal subunit protein bL25 (194 aa).

Belongs to the bacterial ribosomal protein bL25 family. CTC subfamily. As to quaternary structure, part of the 50S ribosomal subunit; part of the 5S rRNA/L5/L18/L25 subcomplex. Contacts the 5S rRNA. Binds to the 5S rRNA independently of L5 and L18.

Its function is as follows. This is one of the proteins that binds to the 5S RNA in the ribosome where it forms part of the central protuberance. This Geobacter sulfurreducens (strain ATCC 51573 / DSM 12127 / PCA) protein is Large ribosomal subunit protein bL25.